The chain runs to 448 residues: Phosphoglucosamine mutase (448 aa).

Ser99 acts as the Phosphoserine intermediate in catalysis. Ser99, Asp238, Asp240, and Asp242 together coordinate Mg(2+). The residue at position 99 (Ser99) is a Phosphoserine.

The protein belongs to the phosphohexose mutase family. Mg(2+) is required as a cofactor. Activated by phosphorylation.

It carries out the reaction alpha-D-glucosamine 1-phosphate = D-glucosamine 6-phosphate. Functionally, catalyzes the conversion of glucosamine-6-phosphate to glucosamine-1-phosphate. This is Phosphoglucosamine mutase from Marinomonas sp. (strain MWYL1).